Reading from the N-terminus, the 615-residue chain is Forkhead box protein O (615 aa).

5 disordered regions span residues Arg39–Gln77, Lys182–Lys205, Gly217–Pro269, Phe318–Tyr359, and Asn389–Leu409. A Phosphothreonine; by PKB/AKT1 modification is found at Thr44. The span at Thr63–Gln77 shows a compositional bias: polar residues. Ser75 carries the post-translational modification Phosphoserine. Positions Trp95 to Gly201 form a DNA-binding region, fork-head. Residue Ser190 is modified to Phosphoserine; by PKB/AKT1. Polar residues-rich tracts occupy residues Ala221–Ser230 and Arg256–Gly265. At Ser259 the chain carries Phosphoserine; by PKB/AKT1. Phosphoserine occurs at positions 262, 263, and 268. Positions Ser326 to Pro335 are enriched in pro residues. Low complexity predominate over residues Pro336–Ala351.

As to quaternary structure, interacts with melt.

The protein resides in the cytoplasm. Its subcellular location is the nucleus. In terms of biological role, transcription factor involved in the regulation of the insulin signaling pathway. Consistently activates both the downstream target Thor\d4EBP and the feedback control target InR. Involved in negative regulation of the cell cycle, modulating cell growth and proliferation. In response to cellular stresses, such as nutrient deprivation or increased levels of reactive oxygen species, foxo is activated and inhibits growth through the action of target genes such as Thor. Foxo activated in the adult fat body can regulate lifespan in adults; an insulin peptide itself may function as one secondary messenger of insulin-regulated aging. Also regulates Lip4, homolog of human acid lipases, thereby acting as a key modulator of lipid metabolism by insulin signaling and integrates insulin responses to glucose and lipid homeostasis. This is Forkhead box protein O from Drosophila erecta (Fruit fly).